We begin with the raw amino-acid sequence, 940 residues long: Isoleucine--tRNA ligase (940 aa).

A 'HIGH' region motif is present at residues 58–68 (PYANGSIHIGH). Residue E564 coordinates L-isoleucyl-5'-AMP. Residues 605–609 (KMSKS) carry the 'KMSKS' region motif. ATP is bound at residue K608. Residues C903, C906, C923, and C926 each contribute to the Zn(2+) site.

This sequence belongs to the class-I aminoacyl-tRNA synthetase family. IleS type 1 subfamily. Monomer. Requires Zn(2+) as cofactor.

Its subcellular location is the cytoplasm. The catalysed reaction is tRNA(Ile) + L-isoleucine + ATP = L-isoleucyl-tRNA(Ile) + AMP + diphosphate. Functionally, catalyzes the attachment of isoleucine to tRNA(Ile). As IleRS can inadvertently accommodate and process structurally similar amino acids such as valine, to avoid such errors it has two additional distinct tRNA(Ile)-dependent editing activities. One activity is designated as 'pretransfer' editing and involves the hydrolysis of activated Val-AMP. The other activity is designated 'posttransfer' editing and involves deacylation of mischarged Val-tRNA(Ile). This Shewanella woodyi (strain ATCC 51908 / MS32) protein is Isoleucine--tRNA ligase.